The primary structure comprises 208 residues: Outer-membrane lipoprotein carrier protein (208 aa).

The N-terminal stretch at 1-22 (MKKIFTIAALSLPLFCHLPAMA) is a signal peptide.

This sequence belongs to the LolA family. In terms of assembly, monomer.

It is found in the periplasm. Participates in the translocation of lipoproteins from the inner membrane to the outer membrane. Only forms a complex with a lipoprotein if the residue after the N-terminal Cys is not an aspartate (The Asp acts as a targeting signal to indicate that the lipoprotein should stay in the inner membrane). This is Outer-membrane lipoprotein carrier protein from Shewanella pealeana (strain ATCC 700345 / ANG-SQ1).